Reading from the N-terminus, the 470-residue chain is Glycine--tRNA ligase (470 aa).

Positions 94 and 183 each coordinate substrate. Residues 215–217 (RNE), 225–230 (FRMVEF), 298–299 (EI), and 342–345 (GCDR) contribute to the ATP site. A substrate-binding site is contributed by 230 to 234 (FEQME). A substrate-binding site is contributed by 338–342 (ETSSG).

Belongs to the class-II aminoacyl-tRNA synthetase family. In terms of assembly, homodimer.

The protein resides in the cytoplasm. It carries out the reaction tRNA(Gly) + glycine + ATP = glycyl-tRNA(Gly) + AMP + diphosphate. In terms of biological role, catalyzes the attachment of glycine to tRNA(Gly). The chain is Glycine--tRNA ligase from Chlorobaculum tepidum (strain ATCC 49652 / DSM 12025 / NBRC 103806 / TLS) (Chlorobium tepidum).